The sequence spans 516 residues: uncharacterized protein (516 aa).

Residues 1–17 (MSVWVALALLGMCVSCT) form the signal peptide. Disordered stretches follow at residues 29–197 (KEPP…EVPR) and 296–426 (RTVS…RDHL). The segment covering 71 to 85 (RVPESSQEREQKPES) has biased composition (basic and acidic residues). Residues 122–144 (VAPPAPPAPTAPRPHRPSPPPVS) show a composition bias toward pro residues. Positions 145–155 (PSASKPKQRAV) are enriched in low complexity. A compositionally biased stretch (basic and acidic residues) spans 351–367 (KAQHGTPRPDEKKDREP). The span at 394 to 406 (SPASQPSAPSAAP) shows a compositional bias: low complexity. Residues 415 to 426 (AHKEGQEKRDHL) show a composition bias toward basic and acidic residues.

This is an uncharacterized protein from Treponema pallidum (strain Nichols).